Consider the following 460-residue polypeptide: Benzyl alcohol O-benzoyltransferase (460 aa).

Catalysis depends on proton acceptor residues His167 and Asp382.

It belongs to the plant acyltransferase family.

The catalysed reaction is benzyl alcohol + benzoyl-CoA = benzyl benzoate + CoA. Probably involved in the formation of volatile ester benzylbenzoate. The chain is Benzyl alcohol O-benzoyltransferase (HSR201) from Nicotiana tabacum (Common tobacco).